The following is a 301-amino-acid chain: uncharacterized protein (301 aa).

Positions 27-85 (YKIGRHTNKSTSPSPSNLFFNSKVLSRQHAELWLDKDTLSVYIRDVKSSNGTFVNETRL) constitute an FHA domain. Residues 187 to 236 (TGKTRDNRNNHHYSRKSSPHISSLAVPSTKHLDGERDRNLKRSTSPLSSS) are disordered. Ser204 is modified (phosphoserine). A compositionally biased stretch (basic and acidic residues) spans 216–226 (KHLDGERDRNL). Residue Ser231 is modified to Phosphoserine.

In terms of assembly, interacts with sad1.

It is found in the nucleus. This is an uncharacterized protein from Schizosaccharomyces pombe (strain 972 / ATCC 24843) (Fission yeast).